The primary structure comprises 200 residues: Nucleoside triphosphate pyrophosphatase (200 aa).

The active-site Proton acceptor is the aspartate 79.

It belongs to the Maf family. The cofactor is a divalent metal cation.

The protein resides in the cytoplasm. The enzyme catalyses a ribonucleoside 5'-triphosphate + H2O = a ribonucleoside 5'-phosphate + diphosphate + H(+). The catalysed reaction is a 2'-deoxyribonucleoside 5'-triphosphate + H2O = a 2'-deoxyribonucleoside 5'-phosphate + diphosphate + H(+). Its function is as follows. Nucleoside triphosphate pyrophosphatase. May have a dual role in cell division arrest and in preventing the incorporation of modified nucleotides into cellular nucleic acids. This chain is Nucleoside triphosphate pyrophosphatase, found in Legionella pneumophila (strain Paris).